The sequence spans 545 residues: Chaperonin GroEL (545 aa).

ATP is bound by residues 30–33, lysine 51, 87–91, glycine 415, and aspartate 494; these read TMGP and DGTTT.

The protein belongs to the chaperonin (HSP60) family. In terms of assembly, forms a cylinder of 14 subunits composed of two heptameric rings stacked back-to-back. Interacts with the co-chaperonin GroES.

The protein localises to the cytoplasm. The enzyme catalyses ATP + H2O + a folded polypeptide = ADP + phosphate + an unfolded polypeptide.. In terms of biological role, together with its co-chaperonin GroES, plays an essential role in assisting protein folding. The GroEL-GroES system forms a nano-cage that allows encapsulation of the non-native substrate proteins and provides a physical environment optimized to promote and accelerate protein folding. This chain is Chaperonin GroEL, found in Helicobacter hepaticus (strain ATCC 51449 / 3B1).